The primary structure comprises 232 residues: Octanoyltransferase (232 aa).

The region spanning 33 to 216 is the BPL/LPL catalytic domain; sequence GRAQDTVILL…HLVRALSNGS (184 aa). Substrate is bound by residues 71 to 78, 146 to 148, and 159 to 161; these read RGGRITWH, AIG, and GFA. Cys-177 acts as the Acyl-thioester intermediate in catalysis.

It belongs to the LipB family.

The protein resides in the cytoplasm. The enzyme catalyses octanoyl-[ACP] + L-lysyl-[protein] = N(6)-octanoyl-L-lysyl-[protein] + holo-[ACP] + H(+). Its pathway is protein modification; protein lipoylation via endogenous pathway; protein N(6)-(lipoyl)lysine from octanoyl-[acyl-carrier-protein]: step 1/2. Its function is as follows. Catalyzes the transfer of endogenously produced octanoic acid from octanoyl-acyl-carrier-protein onto the lipoyl domains of lipoate-dependent enzymes. Lipoyl-ACP can also act as a substrate although octanoyl-ACP is likely to be the physiological substrate. This is Octanoyltransferase from Clavibacter sepedonicus (Clavibacter michiganensis subsp. sepedonicus).